Here is a 162-residue protein sequence, read N- to C-terminus: MALNLQDKKAIVAEVNEAAAGALSAVVADSRGVSVDAMTTLRKQAREAGVYMKVVRNTLARRAVEGTQYECLTDTFTGPSLIAFSNEHPGAAARLFKDFAKENKKFEIKAAAFEGALTDAEVLATLPTYDEAIARLMMCLKEASAGKLVRTIAAIRDQKEAA.

Belongs to the universal ribosomal protein uL10 family. As to quaternary structure, part of the ribosomal stalk of the 50S ribosomal subunit. The N-terminus interacts with L11 and the large rRNA to form the base of the stalk. The C-terminus forms an elongated spine to which L12 dimers bind in a sequential fashion forming a multimeric L10(L12)X complex.

Functionally, forms part of the ribosomal stalk, playing a central role in the interaction of the ribosome with GTP-bound translation factors. In Vibrio vulnificus (strain CMCP6), this protein is Large ribosomal subunit protein uL10.